A 271-amino-acid polypeptide reads, in one-letter code: Calretinin (271 aa).

EF-hand domains lie at 16–51 (LTAT…LEKA), 63–98 (NLGE…EENF), 107–142 (GSST…LLKK), 151–186 (KLQE…QENF), 195–230 (LTSE…LYEK), and 235–270 (MNIQ…SEPP). Ca(2+) contacts are provided by Asp-29, Asp-31, Asn-33, Tyr-35, Glu-40, Asp-76, Asn-78, Asp-80, Lys-82, Glu-87, Asp-120, Asp-122, Ser-124, Tyr-126, Glu-131, Asp-164, Asn-166, Asp-168, Lys-170, Glu-175, Asp-208, Asp-210, Ser-212, Tyr-214, and Glu-219. The residue at position 214 (Tyr-214) is a Phosphotyrosine.

Belongs to the calbindin family.

The protein localises to the synapse. It is found in the cell projection. The protein resides in the dendrite. Calcium-binding protein involved in calcium homeostasis and signal transduction. It plays a critical role in buffering intracellular calcium levels and modulating calcium-dependent signaling pathways. Predominantly expressed in specific neuronal populations, influences synaptic plasticity and neuronal excitability, contributing to learning and memory. During embryonic development, it facilitates neuronal differentiation and maturation. The sequence is that of Calretinin (CALB2) from Bos taurus (Bovine).